The following is a 454-amino-acid chain: Aquaglyceroporin-9 (454 aa).

Topologically, residues 1 to 186 (MEGGLRSPLN…RHTMREPFSE (186 aa)) are cytoplasmic. The chain crosses the membrane as a helical span at residues 187–207 (FFGVFILILFGDGVVAQVVLS). The Extracellular portion of the chain corresponds to 208-216 (SGERGSYQS). The helical transmembrane segment at 217 to 237 (ISWGWGIGVMLGVYASGVSGA) threads the bilayer. Topologically, residues 238–257 (HINPAVTFANCIFRKFPWRK) are cytoplasmic. Residues 240–242 (NPA) carry the NPA 1 motif. Residues 258–278 (FPIYMLAQVLGAMCASGVVYA) traverse the membrane as a helical segment. Residues 279 to 316 (NYKSAIDMFEGGNNIRTVGLNTSSAGIFCTYPAPFMTK) lie on the Extracellular side of the membrane. Residue Asn299 is glycosylated (N-linked (GlcNAc...) asparagine). A helical transmembrane segment spans residues 317–337 (TGQFFSEFVASTILMFCIYAL). Residues 338–351 (QDNGNLGSGNLTPL) are Cytoplasmic-facing. A helical transmembrane segment spans residues 352-372 (GLFFVIFGIGACFGWETGYAI). The NPA 2 signature appears at 373-375 (NLA). Topologically, residues 373 to 403 (NLARDFGPRLMSYFLGYGHEVWSAGNYYFWV) are extracellular. A helical membrane pass occupies residues 404–424 (PMVAPFIGCLFGGWLYDVFIF). Residues 425 to 454 (TGESPINTPWMGLKRLMPGGLGSKKVDSKV) lie on the Cytoplasmic side of the membrane.

Belongs to the MIP/aquaporin (TC 1.A.8) family.

The protein resides in the membrane. It carries out the reaction H2O(in) = H2O(out). It catalyses the reaction glycerol(in) = glycerol(out). In terms of biological role, water channel required to facilitate the transport of water across membranes. May play a role in the vegetative growth and pathogenicity. This is Aquaglyceroporin-9 from Botryotinia fuckeliana (strain B05.10) (Noble rot fungus).